The sequence spans 108 residues: Nucleoid-associated protein Mpe_A2533 (108 aa).

The disordered stretch occupies residues 86–108 (TSEEKMGKLTAGMPLPPGMKLPF). Residues 99–108 (PLPPGMKLPF) show a composition bias toward pro residues.

This sequence belongs to the YbaB/EbfC family. As to quaternary structure, homodimer.

It localises to the cytoplasm. It is found in the nucleoid. Its function is as follows. Binds to DNA and alters its conformation. May be involved in regulation of gene expression, nucleoid organization and DNA protection. The chain is Nucleoid-associated protein Mpe_A2533 from Methylibium petroleiphilum (strain ATCC BAA-1232 / LMG 22953 / PM1).